The sequence spans 112 residues: UPF0145 protein CD630_17110 (112 aa).

Belongs to the UPF0145 family.

In Clostridioides difficile (strain 630) (Peptoclostridium difficile), this protein is UPF0145 protein CD630_17110.